The sequence spans 89 residues: Acylphosphatase (89 aa).

An Acylphosphatase-like domain is found at 3-89 (HIHLQVFGRV…NQKLSDFRSI (87 aa)). Catalysis depends on residues R18 and N36.

This sequence belongs to the acylphosphatase family.

The enzyme catalyses an acyl phosphate + H2O = a carboxylate + phosphate + H(+). The protein is Acylphosphatase (acyP) of Staphylococcus aureus (strain Mu3 / ATCC 700698).